The primary structure comprises 84 residues: Small ribosomal subunit protein bS16 (84 aa).

It belongs to the bacterial ribosomal protein bS16 family.

This is Small ribosomal subunit protein bS16 from Thioalkalivibrio sulfidiphilus (strain HL-EbGR7).